A 288-amino-acid polypeptide reads, in one-letter code: NGG1-interacting factor 3 (288 aa).

The protein belongs to the GTP cyclohydrolase I type 2/NIF3 family. In terms of assembly, may interact with NGG1.

It is found in the mitochondrion. The chain is NGG1-interacting factor 3 from Saccharomyces cerevisiae (strain ATCC 204508 / S288c) (Baker's yeast).